The sequence spans 52 residues: uncharacterized protein (52 aa).

The tract at residues 1–52 is disordered; it reads MVNNDAKIGRREFYDRVESVRPKSPPRERPTYTYSNSRTVDGYSNRGPRADF. Positions 7–30 are enriched in basic and acidic residues; the sequence is KIGRREFYDRVESVRPKSPPRERP.

This is an uncharacterized protein from Dictyostelium discoideum (Social amoeba).